The following is a 117-amino-acid chain: Reprimo-like protein (117 aa).

Residues 64-84 (VAQIAVLCVLSLTVVFGVFFL) traverse the membrane as a helical segment. Ser106 is modified (phosphoserine).

It belongs to the reprimo family.

Its subcellular location is the membrane. The sequence is that of Reprimo-like protein (Rprml) from Mus musculus (Mouse).